The chain runs to 160 residues: SsrA-binding protein (160 aa).

The interval 136–160 (KRHVEKERDANREVQRAMRSKGKDD) is disordered.

The protein belongs to the SmpB family.

It localises to the cytoplasm. Its function is as follows. Required for rescue of stalled ribosomes mediated by trans-translation. Binds to transfer-messenger RNA (tmRNA), required for stable association of tmRNA with ribosomes. tmRNA and SmpB together mimic tRNA shape, replacing the anticodon stem-loop with SmpB. tmRNA is encoded by the ssrA gene; the 2 termini fold to resemble tRNA(Ala) and it encodes a 'tag peptide', a short internal open reading frame. During trans-translation Ala-aminoacylated tmRNA acts like a tRNA, entering the A-site of stalled ribosomes, displacing the stalled mRNA. The ribosome then switches to translate the ORF on the tmRNA; the nascent peptide is terminated with the 'tag peptide' encoded by the tmRNA and targeted for degradation. The ribosome is freed to recommence translation, which seems to be the essential function of trans-translation. The protein is SsrA-binding protein of Ectopseudomonas mendocina (strain ymp) (Pseudomonas mendocina).